Here is a 389-residue protein sequence, read N- to C-terminus: Oxysterol-binding protein 1 (389 aa).

Coiled coils occupy residues 1–31 (MGKKDKNVSVEEEVDEAEIEKLAAENANKPA) and 340–371 (KDDVKGMSQEKVKVEEEQRKLAHHRKNADEWK). A disordered region spans residues 1-43 (MGKKDKNVSVEEEVDEAEIEKLAAENANKPAPQLTKEDLDAMD).

This sequence belongs to the OSBP family. Interacts with dstC.

The protein resides in the cytoplasm. In terms of biological role, may play a role in the regulation of the slug-fruiting body switch. This chain is Oxysterol-binding protein 1 (osbA), found in Dictyostelium discoideum (Social amoeba).